Reading from the N-terminus, the 341-residue chain is NADH-quinone oxidoreductase subunit H (341 aa).

The next 8 membrane-spanning stretches (helical) occupy residues leucine 6 to tyrosine 26, leucine 76 to isoleucine 96, valine 118 to glycine 138, valine 157 to serine 177, leucine 198 to valine 218, phenylalanine 252 to glycine 272, phenylalanine 278 to tryptophan 298, and glycine 313 to valine 333.

The protein belongs to the complex I subunit 1 family. NDH-1 is composed of 14 different subunits. Subunits NuoA, H, J, K, L, M, N constitute the membrane sector of the complex.

The protein resides in the cell membrane. It carries out the reaction a quinone + NADH + 5 H(+)(in) = a quinol + NAD(+) + 4 H(+)(out). Functionally, NDH-1 shuttles electrons from NADH, via FMN and iron-sulfur (Fe-S) centers, to quinones in the respiratory chain. The immediate electron acceptor for the enzyme in this species is believed to be ubiquinone. Couples the redox reaction to proton translocation (for every two electrons transferred, four hydrogen ions are translocated across the cytoplasmic membrane), and thus conserves the redox energy in a proton gradient. This subunit may bind ubiquinone. This is NADH-quinone oxidoreductase subunit H from Thermomicrobium roseum (strain ATCC 27502 / DSM 5159 / P-2).